The primary structure comprises 270 residues: Phosphatidate cytidylyltransferase (270 aa).

8 helical membrane passes run 17-37, 55-75, 81-101, 104-124, 129-149, 170-190, 193-213, and 248-268; these read FVVL…AILI, FFYV…FEEP, ILFI…SQVF, VAAF…FLPI, GAAN…FAYF, EGVI…RLVV, LLSV…TVAI, and IDGL…LEGV.

Belongs to the CDS family.

The protein localises to the cell membrane. It carries out the reaction a 1,2-diacyl-sn-glycero-3-phosphate + CTP + H(+) = a CDP-1,2-diacyl-sn-glycerol + diphosphate. Its pathway is phospholipid metabolism; CDP-diacylglycerol biosynthesis; CDP-diacylglycerol from sn-glycerol 3-phosphate: step 3/3. The sequence is that of Phosphatidate cytidylyltransferase (cdsA) from Thermotoga maritima (strain ATCC 43589 / DSM 3109 / JCM 10099 / NBRC 100826 / MSB8).